A 452-amino-acid polypeptide reads, in one-letter code: Pup--protein ligase (452 aa).

Residue E9 participates in Mg(2+) binding. Position 53 (R53) interacts with ATP. Y55 contributes to the Mg(2+) binding site. The active-site Proton acceptor is D57. E63 serves as a coordination point for Mg(2+). ATP-binding residues include T66 and W419.

This sequence belongs to the Pup ligase/Pup deamidase family. Pup-conjugating enzyme subfamily.

It carries out the reaction ATP + [prokaryotic ubiquitin-like protein]-L-glutamate + [protein]-L-lysine = ADP + phosphate + N(6)-([prokaryotic ubiquitin-like protein]-gamma-L-glutamyl)-[protein]-L-lysine.. The protein operates within protein degradation; proteasomal Pup-dependent pathway. It participates in protein modification; protein pupylation. Catalyzes the covalent attachment of the prokaryotic ubiquitin-like protein modifier Pup to the proteasomal substrate proteins, thereby targeting them for proteasomal degradation. This tagging system is termed pupylation. The ligation reaction involves the side-chain carboxylate of the C-terminal glutamate of Pup and the side-chain amino group of a substrate lysine. This is Pup--protein ligase from Rhodococcus erythropolis (strain PR4 / NBRC 100887).